A 101-amino-acid polypeptide reads, in one-letter code: NAD(P)H-quinone oxidoreductase subunit 4L, chloroplastic (101 aa).

A run of 3 helical transmembrane segments spans residues 2 to 22 (MLEYVLGLSAYLFSIGIYGLI), 32 to 52 (MCLELILNAVNINFVTFSDFF), and 61 to 81 (IFSIFVISIAAAEAAIGPAIV).

It belongs to the complex I subunit 4L family. As to quaternary structure, NDH is composed of at least 16 different subunits, 5 of which are encoded in the nucleus.

The protein resides in the plastid. It is found in the chloroplast thylakoid membrane. It carries out the reaction a plastoquinone + NADH + (n+1) H(+)(in) = a plastoquinol + NAD(+) + n H(+)(out). The catalysed reaction is a plastoquinone + NADPH + (n+1) H(+)(in) = a plastoquinol + NADP(+) + n H(+)(out). Functionally, NDH shuttles electrons from NAD(P)H:plastoquinone, via FMN and iron-sulfur (Fe-S) centers, to quinones in the photosynthetic chain and possibly in a chloroplast respiratory chain. The immediate electron acceptor for the enzyme in this species is believed to be plastoquinone. Couples the redox reaction to proton translocation, and thus conserves the redox energy in a proton gradient. This Populus trichocarpa (Western balsam poplar) protein is NAD(P)H-quinone oxidoreductase subunit 4L, chloroplastic.